The chain runs to 440 residues: Probable D-serine dehydratase (440 aa).

Lys-111 is subject to N6-(pyridoxal phosphate)lysine.

Belongs to the serine/threonine dehydratase family. DsdA subfamily. Pyridoxal 5'-phosphate serves as cofactor.

The catalysed reaction is D-serine = pyruvate + NH4(+). This is Probable D-serine dehydratase from Rhizobium leguminosarum bv. trifolii (strain WSM2304).